A 513-amino-acid polypeptide reads, in one-letter code: rRNA N(6)-adenosine-methyltransferase ZCCHC4 (513 aa).

Cys-40, His-42, Cys-64, Cys-73, Cys-125, Cys-128, His-140, and His-143 together coordinate Zn(2+). The GRF-type zinc-finger motif lies at 40–82 (CPHGPTLLFVKVTQGKEETRRFYACSACRDRKDCNFFQWEDEK). S-adenosyl-L-methionine contacts are provided by residues 172–175 (QYLF), Arg-202, Asp-225, 243–244 (NM), and Asp-276. The segment at 337 to 357 (QVDYDNHALYKHGKTGRKQSP) is regulatory loop. Positions 380, 383, 393, 394, 397, 400, 410, 411, 414, 417, 424, 425, 428, 431, 436, and 438 each coordinate Zn(2+). Positions 395–447 (ELCNSCTSKDGRKWNHCFLCKKCVKPSWIHCSICNHCAVPDHSCEGPKHGCFI) constitute a DHHC domain. The CCHC-type zinc-finger motif lies at 443-460 (HGCFICGELDHKRSTCPN). Residues 466–481 (RANKAVRKQKQRKSNK) show a composition bias toward basic residues. A disordered region spans residues 466–513 (RANKAVRKQKQRKSNKMKMETTKGQSMNHTSATRRKKRRERAHQYLGS). Positions 487–496 (TKGQSMNHTS) are enriched in polar residues. Positions 497–506 (ATRRKKRRER) are enriched in basic residues.

It belongs to the ZCCHC4 family. In terms of assembly, interacts with components of the ASC-1 complex TRIP4, ASCC1, ASCC2 and ASCC3. Interact with AHCYL1 and AHCYL2. Interact with YTHDC2.

The protein localises to the nucleus. It localises to the nucleolus. Its subcellular location is the cytoplasm. The enzyme catalyses adenosine(4220) in 28S rRNA + S-adenosyl-L-methionine = N(6)-methyladenosine(4220) in 28S rRNA + S-adenosyl-L-homocysteine + H(+). Its function is as follows. rRNA N6-methyltransferase that specifically methylates the adenine in position 4220 of 28S rRNA. N6-methylation of adenine(4220) in 28S rRNA is required for translation. The chain is rRNA N(6)-adenosine-methyltransferase ZCCHC4 from Homo sapiens (Human).